The chain runs to 392 residues: Queuine tRNA-ribosyltransferase (392 aa).

The active-site Proton acceptor is Asp92. Residues 92-96, Asp146, Gln188, and Gly215 contribute to the substrate site; that span reads DSGGF. The interval 246–252 is RNA binding; it reads GVGSPED. Residue Asp265 is the Nucleophile of the active site. The segment at 270–274 is RNA binding; important for wobble base 34 recognition; that stretch reads TRLGR. Cys303, Cys305, Cys308, and His334 together coordinate Zn(2+).

Belongs to the queuine tRNA-ribosyltransferase family. In terms of assembly, homodimer. Within each dimer, one monomer is responsible for RNA recognition and catalysis, while the other monomer binds to the replacement base PreQ1. Zn(2+) is required as a cofactor.

It carries out the reaction 7-aminomethyl-7-carbaguanine + guanosine(34) in tRNA = 7-aminomethyl-7-carbaguanosine(34) in tRNA + guanine. Its pathway is tRNA modification; tRNA-queuosine biosynthesis. Functionally, catalyzes the base-exchange of a guanine (G) residue with the queuine precursor 7-aminomethyl-7-deazaguanine (PreQ1) at position 34 (anticodon wobble position) in tRNAs with GU(N) anticodons (tRNA-Asp, -Asn, -His and -Tyr). Catalysis occurs through a double-displacement mechanism. The nucleophile active site attacks the C1' of nucleotide 34 to detach the guanine base from the RNA, forming a covalent enzyme-RNA intermediate. The proton acceptor active site deprotonates the incoming PreQ1, allowing a nucleophilic attack on the C1' of the ribose to form the product. After dissociation, two additional enzymatic reactions on the tRNA convert PreQ1 to queuine (Q), resulting in the hypermodified nucleoside queuosine (7-(((4,5-cis-dihydroxy-2-cyclopenten-1-yl)amino)methyl)-7-deazaguanosine). In Herpetosiphon aurantiacus (strain ATCC 23779 / DSM 785 / 114-95), this protein is Queuine tRNA-ribosyltransferase.